A 177-amino-acid polypeptide reads, in one-letter code: Coatomer subunit zeta-1 (177 aa).

The protein belongs to the adaptor complexes small subunit family. Oligomeric complex that consists of at least the alpha, beta, beta', gamma, delta, epsilon and zeta subunits.

It localises to the cytoplasm. Its subcellular location is the golgi apparatus membrane. The protein resides in the cytoplasmic vesicle. The protein localises to the COPI-coated vesicle membrane. The coatomer is a cytosolic protein complex that binds to dilysine motifs and reversibly associates with Golgi non-clathrin-coated vesicles, which further mediate biosynthetic protein transport from the ER, via the Golgi up to the trans Golgi network. Coatomer complex is required for budding from Golgi membranes, and is essential for the retrograde Golgi-to-ER transport of dilysine-tagged proteins. The zeta subunit may be involved in regulating the coat assembly and, hence, the rate of biosynthetic protein transport due to its association-dissociation properties with the coatomer complex. In Oryza sativa subsp. japonica (Rice), this protein is Coatomer subunit zeta-1 (COPZ1).